The chain runs to 185 residues: Peptidyl-tRNA hydrolase (185 aa).

F14 is a tRNA binding site. The Proton acceptor role is filled by H19. Y64, N66, and N112 together coordinate tRNA.

Belongs to the PTH family. As to quaternary structure, monomer.

It is found in the cytoplasm. The enzyme catalyses an N-acyl-L-alpha-aminoacyl-tRNA + H2O = an N-acyl-L-amino acid + a tRNA + H(+). Hydrolyzes ribosome-free peptidyl-tRNAs (with 1 or more amino acids incorporated), which drop off the ribosome during protein synthesis, or as a result of ribosome stalling. Its function is as follows. Catalyzes the release of premature peptidyl moieties from peptidyl-tRNA molecules trapped in stalled 50S ribosomal subunits, and thus maintains levels of free tRNAs and 50S ribosomes. This Exiguobacterium sp. (strain ATCC BAA-1283 / AT1b) protein is Peptidyl-tRNA hydrolase.